The primary structure comprises 144 residues: MLLNTLSPAAGSKHAPKRLGRGVGSGLGKTGGRGHKGQKSRSGGKVRPGFEGGQMPLKQRLPKFGFTSRKSFVSAEVRLSELAKVTGDVVDLNALKAANLVTKNIEFAKIVLSGEISKAVTVKGLRVTKGAKAAIEAAGGKIEE.

The interval 1 to 57 (MLLNTLSPAAGSKHAPKRLGRGVGSGLGKTGGRGHKGQKSRSGGKVRPGFEGGQMPL) is disordered. The span at 21-31 (RGVGSGLGKTG) shows a compositional bias: gly residues. The segment covering 32 to 44 (GRGHKGQKSRSGG) has biased composition (basic residues).

Belongs to the universal ribosomal protein uL15 family. As to quaternary structure, part of the 50S ribosomal subunit.

Its function is as follows. Binds to the 23S rRNA. The sequence is that of Large ribosomal subunit protein uL15 from Vibrio cholerae serotype O1 (strain ATCC 39541 / Classical Ogawa 395 / O395).